A 210-amino-acid polypeptide reads, in one-letter code: Noranthrone monooxygenase (210 aa).

A run of 4 helical transmembrane segments spans residues 59–79 (TGSFLTGAMMNLHLLTIPILI), 105–125 (GIALVTGALYGYAAWAKYSVG), 131–151 (WMVAGVTTVSMVPYTWMFMNA), and 188–208 (VRALFPLAGSVMGMLGVCGVV).

The protein belongs to the anthrone oxygenase family.

Its subcellular location is the membrane. The catalysed reaction is noranthrone + O2 = norsolorinic acid + H2O. Its pathway is mycotoxin biosynthesis; aflatoxin biosynthesis. Functionally, monooxygenase that converts norsolorinic acid anthrone to norsolorinic acid during aflatoxin biosynthesis. This is Noranthrone monooxygenase (hypC) from Aspergillus flavus (strain ATCC 200026 / FGSC A1120 / IAM 13836 / NRRL 3357 / JCM 12722 / SRRC 167).